We begin with the raw amino-acid sequence, 109 residues long: Transcription initiation factor IIA subunit 2 (109 aa).

The protein belongs to the TFIIA subunit 2 family. In terms of assembly, TFIIA is a heterodimer of the large unprocessed subunit 1 and a small subunit gamma. It was originally believed to be a heterotrimer of an alpha (p35), a beta (p19) and a gamma subunit (p12). Interacts with NCOA6 general coactivator. TFIIA forms a complex with TBP. Interacts with HSF1 (via transactivation domain). Part of TBP-based Pol II pre-initiation complex (PIC), in which Pol II core assembles with general transcription factors and other specific initiation factors including GTF2E1, GTF2E2, GTF2F1, GTF2F2, TCEA1, ERCC2, ERCC3, GTF2H2, GTF2H3, GTF2H4, GTF2H5, GTF2A1, GTF2A2, GTF2B and TBP; this large multi-subunit PIC complex mediates DNA unwinding and targets Pol II core to the transcription start site where the first phosphodiester bond forms. As to quaternary structure, (Microbial infection) Interacts with SV40 Large T antigen.

Its subcellular location is the nucleus. In terms of biological role, TFIIA is a component of the transcription machinery of RNA polymerase II and plays an important role in transcriptional activation. TFIIA in a complex with TBP mediates transcriptional activity. In Homo sapiens (Human), this protein is Transcription initiation factor IIA subunit 2 (GTF2A2).